A 110-amino-acid polypeptide reads, in one-letter code: MIQVLLVTICLAVFPYQVSSKTLKSGSVNEYEVVNPGTVTGLPKGAVKQPEKKHEPMKGNTLQKLPLCTTGPCCRQCKLKPAGTTCWRTSVSSHYCTGRSCECPSYPGNG.

The first 20 residues, 1–20 (MIQVLLVTICLAVFPYQVSS), serve as a signal peptide directing secretion. Residues 21 to 67 (KTLKSGSVNEYEVVNPGTVTGLPKGAVKQPEKKHEPMKGNTLQKLPL) constitute a propeptide that is removed on maturation. The Disintegrin domain maps to 27–110 (SVNEYEVVNP…CECPSYPGNG (84 aa)). 4 cysteine pairs are disulfide-bonded: Cys-68-Cys-77, Cys-73-Cys-96, Cys-74-Cys-101, and Cys-86-Cys-103. A Cell attachment site; atypical (RTS) motif is present at residues 88–90 (RTS).

It belongs to the disintegrin family. Short disintegrin subfamily. Monomer. In terms of processing, two conformers are found, they may differ by their disulfide bond connectivities. Conformer 2 is 33 times less active than conformer 1. Conformer 2 may represent a non-native protein. Post-translationally, the C-terminal dipeptide may be post-translationally removed, as seen in disintegrins that possess a KTS integrin-binding motif. As to expression, expressed by the venom gland.

Its subcellular location is the secreted. Functionally, recombinant protein inhibits the adhesion of alpha-1/beta-1-K562 (ITGA1/ITGB1) cells to collagen IV with an IC(50) of 80 nM. The polypeptide is Disintegrin jerdostatin (Protobothrops jerdonii (Jerdon's pitviper)).